The following is a 425-amino-acid chain: 3-isopropylmalate dehydratase large subunit (425 aa).

[4Fe-4S] cluster-binding residues include Cys306, Cys366, and Cys369.

Belongs to the aconitase/IPM isomerase family. LeuC type 2 subfamily. In terms of assembly, heterodimer of LeuC and LeuD. [4Fe-4S] cluster is required as a cofactor.

The enzyme catalyses (2R,3S)-3-isopropylmalate = (2S)-2-isopropylmalate. The protein operates within amino-acid biosynthesis; L-leucine biosynthesis; L-leucine from 3-methyl-2-oxobutanoate: step 2/4. Catalyzes the isomerization between 2-isopropylmalate and 3-isopropylmalate, via the formation of 2-isopropylmaleate. This chain is 3-isopropylmalate dehydratase large subunit, found in Nautilia profundicola (strain ATCC BAA-1463 / DSM 18972 / AmH).